The following is a 1610-amino-acid chain: Adenylate cyclase type 10 (1610 aa).

2 Guanylate cyclase domains span residues 42–179 and 293–418; these read VLMF…RLAQ and TIVF…ARMM. Residues D47 and I48 each contribute to the Mg(2+) site. 47–52 contributes to the ATP binding site; it reads DISGFT. K95 serves as a coordination point for hydrogencarbonate. A Mg(2+)-binding site is contributed by D99. ATP is bound by residues D99 and K144. Residues V167, R176, and M337 each contribute to the hydrogencarbonate site. ATP contacts are provided by residues V406 and 412 to 416; that span reads NIAAR.

This sequence belongs to the adenylyl cyclase class-4/guanylyl cyclase family. It depends on Mg(2+) as a cofactor. The cofactor is Mn(2+).

It is found in the cell membrane. The protein resides in the cytoplasm. It localises to the cytoskeleton. The protein localises to the perinuclear region. Its subcellular location is the nucleus. It is found in the cell projection. The protein resides in the cilium. It carries out the reaction ATP = 3',5'-cyclic AMP + diphosphate. Activated by manganese or magnesium ions. In the presence of magnesium ions, the enzyme is activated by bicarbonate. Calcium mildly increases the enzyme activity, also in the presence of magnesium ions. Functionally, catalyzes the formation of the signaling molecule cAMP. May function as sensor that mediates responses to changes in cellular bicarbonate and CO(2) levels. Has a critical role in mammalian spermatogenesis by producing the cAMP which regulates cAMP-responsive nuclear factors indispensable for sperm maturation in the epididymis. Induces capacitation, the maturational process that sperm undergo prior to fertilization. Involved in ciliary beat regulation. The protein is Adenylate cyclase type 10 (ADCY10) of Oryctolagus cuniculus (Rabbit).